The following is a 559-amino-acid chain: MAEVKSDIEIARAAKKKQIQEIGQKIGIPTEHLLPYGHDKAKISAEFIKSVKGNKDGKLILVTAINPTPAGEGKTTTTVGLGDGLNRIGKKAIVCIREASLGPNFGVKGGAAGGGYAQVVPMEDMNLHFTGDFHAITTAHNLLSALIDNHIYWGNELGIDTRRVVWRRVMDMNDRALREMICSLGGVANGFPREGGFDITVASEVMAILCLSTDLKDLEKRLGDIIVAYRRDKSPVYARDLKADGAMAVLLKDAMQPNLVQTLENNPAFVHGGPFANIAHGCNSVVATTTALKLADYVVTEAGFGADLGAEKFFDIKCRKAGLKPAAAVIVATVRAMKMNGGVKKEDLGKENIEAVKKGCANLGRHIENIRQFGVPAVVAINHFYSDTDAEIQAMKDYVASMGEEAVLCKHWAKGSAGIEELANKVVALAESGASQFAPLYPDAMPLFEKINTIVQRIYRGSEAIADKSVRDQLHAWEQAGYGNLPVCMAKTQYSFSTDPNLRGAPTGHTVPVREVRLSAGAGFVVIICGEVMTMPGLPKAPSSEKIFLNEAGQIEGLF.

Position 68-75 (68-75 (TPAGEGKT)) interacts with ATP.

This sequence belongs to the formate--tetrahydrofolate ligase family.

It catalyses the reaction (6S)-5,6,7,8-tetrahydrofolate + formate + ATP = (6R)-10-formyltetrahydrofolate + ADP + phosphate. It participates in one-carbon metabolism; tetrahydrofolate interconversion. This is Formate--tetrahydrofolate ligase from Mesorhizobium japonicum (strain LMG 29417 / CECT 9101 / MAFF 303099) (Mesorhizobium loti (strain MAFF 303099)).